Consider the following 145-residue polypeptide: 3-hydroxyacyl-[acyl-carrier-protein] dehydratase FabZ (145 aa).

The active site involves H49.

This sequence belongs to the thioester dehydratase family. FabZ subfamily.

Its subcellular location is the cytoplasm. The enzyme catalyses a (3R)-hydroxyacyl-[ACP] = a (2E)-enoyl-[ACP] + H2O. Functionally, involved in unsaturated fatty acids biosynthesis. Catalyzes the dehydration of short chain beta-hydroxyacyl-ACPs and long chain saturated and unsaturated beta-hydroxyacyl-ACPs. This Rickettsia conorii (strain ATCC VR-613 / Malish 7) protein is 3-hydroxyacyl-[acyl-carrier-protein] dehydratase FabZ.